The following is a 361-amino-acid chain: UDP-N-acetylglucosamine--N-acetylmuramyl-(pentapeptide) pyrophosphoryl-undecaprenol N-acetylglucosamine transferase (361 aa).

UDP-N-acetyl-alpha-D-glucosamine is bound by residues 11–13, asparagine 120, arginine 161, serine 188, and glutamine 282; that span reads TGG.

This sequence belongs to the glycosyltransferase 28 family. MurG subfamily.

The protein resides in the cell inner membrane. The catalysed reaction is di-trans,octa-cis-undecaprenyl diphospho-N-acetyl-alpha-D-muramoyl-L-alanyl-D-glutamyl-meso-2,6-diaminopimeloyl-D-alanyl-D-alanine + UDP-N-acetyl-alpha-D-glucosamine = di-trans,octa-cis-undecaprenyl diphospho-[N-acetyl-alpha-D-glucosaminyl-(1-&gt;4)]-N-acetyl-alpha-D-muramoyl-L-alanyl-D-glutamyl-meso-2,6-diaminopimeloyl-D-alanyl-D-alanine + UDP + H(+). It functions in the pathway cell wall biogenesis; peptidoglycan biosynthesis. Functionally, cell wall formation. Catalyzes the transfer of a GlcNAc subunit on undecaprenyl-pyrophosphoryl-MurNAc-pentapeptide (lipid intermediate I) to form undecaprenyl-pyrophosphoryl-MurNAc-(pentapeptide)GlcNAc (lipid intermediate II). This is UDP-N-acetylglucosamine--N-acetylmuramyl-(pentapeptide) pyrophosphoryl-undecaprenol N-acetylglucosamine transferase from Prochlorococcus marinus (strain MIT 9303).